Consider the following 484-residue polypeptide: Probable peptide/nitrate transporter At3g43790 (484 aa).

Transmembrane regions (helical) follow at residues phenylalanine 39–tyrosine 59, phenylalanine 76–tryptophan 96, proline 107–threonine 127, phenylalanine 129–isoleucine 149, valine 168–alanine 188, phenylalanine 210–leucine 230, methionine 278–phenylalanine 298, valine 318–proline 338, valine 355–leucine 375, cysteine 381–leucine 401, isoleucine 416–phenylalanine 436, and valine 460–isoleucine 480.

Belongs to the major facilitator superfamily.

The protein resides in the membrane. This chain is Probable peptide/nitrate transporter At3g43790 (ZIFL2), found in Arabidopsis thaliana (Mouse-ear cress).